The chain runs to 119 residues: Ribonuclease P protein component (119 aa).

This sequence belongs to the RnpA family. As to quaternary structure, consists of a catalytic RNA component (M1 or rnpB) and a protein subunit.

It catalyses the reaction Endonucleolytic cleavage of RNA, removing 5'-extranucleotides from tRNA precursor.. Functionally, RNaseP catalyzes the removal of the 5'-leader sequence from pre-tRNA to produce the mature 5'-terminus. It can also cleave other RNA substrates such as 4.5S RNA. The protein component plays an auxiliary but essential role in vivo by binding to the 5'-leader sequence and broadening the substrate specificity of the ribozyme. The polypeptide is Ribonuclease P protein component (Salmonella paratyphi A (strain AKU_12601)).